Here is a 209-residue protein sequence, read N- to C-terminus: MSKTAGVGRLGGARAADAAQQQQLAAGDAAVARAARPIETLLRAAPLVLCVAAMTLMLRDQQSNEYGTVAYSDLGGFKYLVYANGLCAAYSLASAFYTAVPRPATVSRSWVVFLLDQVFTYLILAAGAAAAELLYLAYNGDKEVTWSEACGVFGSFCRQARISVAITFGAVLCFILLSLLSSYRLFSAYEAPPPSALGSKGVEIAAYPR.

Topologically, residues 1–37 (MSKTAGVGRLGGARAADAAQQQQLAAGDAAVARAARP) are cytoplasmic. The chain crosses the membrane as a helical span at residues 38-58 (IETLLRAAPLVLCVAAMTLML). The Extracellular portion of the chain corresponds to 59–79 (RDQQSNEYGTVAYSDLGGFKY). A helical membrane pass occupies residues 80-100 (LVYANGLCAAYSLASAFYTAV). Topologically, residues 101-109 (PRPATVSRS) are cytoplasmic. Residues 110–130 (WVVFLLDQVFTYLILAAGAAA) traverse the membrane as a helical segment. At 131–161 (AELLYLAYNGDKEVTWSEACGVFGSFCRQAR) the chain is on the extracellular side. The chain crosses the membrane as a helical span at residues 162–182 (ISVAITFGAVLCFILLSLLSS). The Cytoplasmic portion of the chain corresponds to 183–209 (YRLFSAYEAPPPSALGSKGVEIAAYPR).

It belongs to the Casparian strip membrane proteins (CASP) family. In terms of assembly, homodimer and heterodimers.

The protein resides in the cell membrane. The sequence is that of CASP-like protein 2A2 from Zea mays (Maize).